Reading from the N-terminus, the 448-residue chain is Vicilin Cor a 11.0101 (448 aa).

A compositionally biased stretch (basic and acidic residues) spans 1-44; sequence MLPKEDPELKKCKHKCRDERQFDEQQRRDGKQICEEKARERQQE. The interval 1-66 is disordered; that stretch reads MLPKEDPELK…QEENPYVFQD (66 aa). Asn47 carries N-linked (GlcNAc...) asparagine glycosylation. Cupin type-1 domains follow at residues 84 to 220 and 263 to 418; these read ENFT…EQLE and INLL…REVE. An N-linked (GlcNAc...) asparagine glycan is attached at Asn301. Cu cation-binding residues include Cys333, His335, and His362.

Belongs to the 7S seed storage protein family. In terms of assembly, homotrimer. Homohexamer. In terms of processing, N-glycosylated at Asn-301 mostly with xylosylated paucimannosidic-type N-glycan MMX (an N-linked glycan with beta-1,2-xylose residue in the structure) and also with MMXF (a complex N-linked glycan with alpha-1,3-fucose and beta-1,2-xylose residues in the structure). A mixture of proteolytically processed and unprocessed subunits exist. As to expression, expressed in seed (at protein level). Expressed in seed.

Its function is as follows. Seed storage protein. Does not have superoxide dismutase (SOD) activity. This is Vicilin Cor a 11.0101 from Corylus avellana (European hazel).